Consider the following 479-residue polypeptide: UDP-N-acetylmuramate--L-alanine ligase (479 aa).

127-133 (GTHGKTT) lines the ATP pocket.

This sequence belongs to the MurCDEF family.

The protein localises to the cytoplasm. It carries out the reaction UDP-N-acetyl-alpha-D-muramate + L-alanine + ATP = UDP-N-acetyl-alpha-D-muramoyl-L-alanine + ADP + phosphate + H(+). It participates in cell wall biogenesis; peptidoglycan biosynthesis. Functionally, cell wall formation. This Shewanella denitrificans (strain OS217 / ATCC BAA-1090 / DSM 15013) protein is UDP-N-acetylmuramate--L-alanine ligase.